Consider the following 65-residue polypeptide: Alpha-conotoxin BnIA (65 aa).

The first 21 residues, 1-21, serve as a signal peptide directing secretion; that stretch reads MGMRMMFTMFLLVVLATTVVS. Positions 22–48 are excised as a propeptide; sequence FASDRASDGRNAAAKDKASDLVALTVK. 2 cysteine pairs are disulfide-bonded: Cys50/Cys56 and Cys51/Cys64. The interval 52–54 is ser-Xaa-Pro motif, crucial for potent interaction with nAChR; sequence SHP. Cys64 bears the Cysteine amide mark.

This sequence belongs to the conotoxin A superfamily. As to expression, expressed by the venom duct.

The protein localises to the secreted. In terms of biological role, alpha-conotoxins act on postsynaptic membranes, they bind to the nicotinic acetylcholine receptors (nAChR) and thus inhibit them. This toxin inhibits acetylcholine-evoked currents reversibly in oocytes expressing the human alpha-7/CHRNA7 nAChR, and blocks nerve-evoked skeletal muscle contractions in isolated mouse neuromuscular preparations, but with a very low affinity. The chain is Alpha-conotoxin BnIA from Conus bandanus (Banded marble cone).